Reading from the N-terminus, the 430-residue chain is Glucose-1-phosphate adenylyltransferase (430 aa).

Residues glycine 163, 178 to 179 (EK), and serine 210 contribute to the alpha-D-glucose 1-phosphate site.

This sequence belongs to the bacterial/plant glucose-1-phosphate adenylyltransferase family. As to quaternary structure, homotetramer.

The enzyme catalyses alpha-D-glucose 1-phosphate + ATP + H(+) = ADP-alpha-D-glucose + diphosphate. It participates in glycan biosynthesis; glycogen biosynthesis. Its function is as follows. Involved in the biosynthesis of ADP-glucose, a building block required for the elongation reactions to produce glycogen. Catalyzes the reaction between ATP and alpha-D-glucose 1-phosphate (G1P) to produce pyrophosphate and ADP-Glc. The sequence is that of Glucose-1-phosphate adenylyltransferase from Synechococcus elongatus (strain ATCC 33912 / PCC 7942 / FACHB-805) (Anacystis nidulans R2).